The chain runs to 302 residues: Pantothenate synthetase (302 aa).

Position 47-54 (47-54 (MGALHEGH)) interacts with ATP. The Proton donor role is filled by H54. Q79 contributes to the (R)-pantoate binding site. Beta-alanine is bound at residue Q79. An ATP-binding site is contributed by 165–168 (GEKD). Q171 provides a ligand contact to (R)-pantoate. Residues V194 and 202–205 (LSSR) each bind ATP.

This sequence belongs to the pantothenate synthetase family. As to quaternary structure, homodimer.

The protein localises to the cytoplasm. It carries out the reaction (R)-pantoate + beta-alanine + ATP = (R)-pantothenate + AMP + diphosphate + H(+). Its pathway is cofactor biosynthesis; (R)-pantothenate biosynthesis; (R)-pantothenate from (R)-pantoate and beta-alanine: step 1/1. In terms of biological role, catalyzes the condensation of pantoate with beta-alanine in an ATP-dependent reaction via a pantoyl-adenylate intermediate. This chain is Pantothenate synthetase, found in Saccharopolyspora erythraea (strain ATCC 11635 / DSM 40517 / JCM 4748 / NBRC 13426 / NCIMB 8594 / NRRL 2338).